We begin with the raw amino-acid sequence, 394 residues long: Elongation factor Tu (394 aa).

The tr-type G domain occupies 10–204; sequence KPHVNVGTIG…ALDSYIPEPE (195 aa). The interval 19 to 26 is G1; sequence GHVDHGKT. Residue 19 to 26 participates in GTP binding; the sequence is GHVDHGKT. Thr26 contributes to the Mg(2+) binding site. Residues 60 to 64 are G2; the sequence is GITIN. Residues 81–84 are G3; sequence DCPG. GTP-binding positions include 81 to 85 and 136 to 139; these read DCPGH and NKCD. A G4 region spans residues 136 to 139; the sequence is NKCD. Residues 174–176 are G5; the sequence is SAL.

It belongs to the TRAFAC class translation factor GTPase superfamily. Classic translation factor GTPase family. EF-Tu/EF-1A subfamily. Monomer.

The protein resides in the cytoplasm. The enzyme catalyses GTP + H2O = GDP + phosphate + H(+). GTP hydrolase that promotes the GTP-dependent binding of aminoacyl-tRNA to the A-site of ribosomes during protein biosynthesis. This Sodalis glossinidius (strain morsitans) protein is Elongation factor Tu.